We begin with the raw amino-acid sequence, 145 residues long: 3-dehydroquinate dehydratase (145 aa).

Y24 serves as the catalytic Proton acceptor. Residues N75, H81, and D88 each contribute to the substrate site. Catalysis depends on H101, which acts as the Proton donor. Substrate contacts are provided by residues 102–103 (IS) and R112.

Belongs to the type-II 3-dehydroquinase family. In terms of assembly, homododecamer.

The enzyme catalyses 3-dehydroquinate = 3-dehydroshikimate + H2O. It participates in metabolic intermediate biosynthesis; chorismate biosynthesis; chorismate from D-erythrose 4-phosphate and phosphoenolpyruvate: step 3/7. Catalyzes a trans-dehydration via an enolate intermediate. This is 3-dehydroquinate dehydratase from Corynebacterium glutamicum (strain R).